The following is a 431-amino-acid chain: MVGLEKNDPLMLARQLPIKSVALILAGGRGTRLKDLTNKRAKPAVHFGGKFRIIDFALSNCINSGIRRIGVITQYQSHTLVQHIQRGWSFFNEEMNEFVDLLPAQQRMKGENWYRGTADAVTQNLDIIRRYKAEYVVILAGDHIYKQDYSRMLIDHVEKGARCTVACMPVPIQEASAFGVMAVDQDEKIIEFVEKPANPPSMPNDPTRSLASMGIYVFDADYLYELLEEDDNDENSSHDFGKDIIPKITQAGMAYAHPFPLSCVQSDPDSEPYWRDVGTLEAYWKANLDLASVVPELDMYDQHWPIRTYNESLPPAKFVQDRSGSHGMTLNSLVSGGCVISGSVVVQSVLFSRVRVNSFCNIDSAVLLPEVWVGRSCRLRRCVIDRACVIPEGMVIGENAEEDARRFYRSEEGIVLVTREMLRKLGHKQER.

Lysine 39 is a binding site for beta-D-fructose 1,6-bisphosphate. 3 residues coordinate AMP: arginine 40, histidine 46, and arginine 52. Tyrosine 114 is a binding site for alpha-D-glucose 1-phosphate. Arginine 130 is a binding site for AMP. Alpha-D-glucose 1-phosphate contacts are provided by residues glycine 179, 194–195 (EK), and serine 212. The AMP site is built by glutamate 370 and arginine 386. Beta-D-fructose 1,6-bisphosphate contacts are provided by residues 419 to 423 (REMLR) and 429 to 431 (QER).

This sequence belongs to the bacterial/plant glucose-1-phosphate adenylyltransferase family. In terms of assembly, homotetramer.

The catalysed reaction is alpha-D-glucose 1-phosphate + ATP + H(+) = ADP-alpha-D-glucose + diphosphate. It participates in glycan biosynthesis; glycogen biosynthesis. With respect to regulation, allosterically activated by fructose-1,6-bisphosphate (F16BP) and inhibited by AMP. In terms of biological role, involved in the biosynthesis of ADP-glucose, a building block required for the elongation reactions to produce glycogen. Catalyzes the reaction between ATP and alpha-D-glucose 1-phosphate (G1P) to produce pyrophosphate and ADP-Glc. This Escherichia fergusonii (strain ATCC 35469 / DSM 13698 / CCUG 18766 / IAM 14443 / JCM 21226 / LMG 7866 / NBRC 102419 / NCTC 12128 / CDC 0568-73) protein is Glucose-1-phosphate adenylyltransferase.